A 428-amino-acid chain; its full sequence is MANIERVIGREVLDSRGNPTVEADVWLDDGSFGRAAVPSGASTGSREAVELRDGGGRYNGKGVRTAVENVNTTIREALQGGSADDQAALDRQLIDLDGSPNKDRLGANAILAVSMAVAQAAARSRGLPLYRHLQQEGSAAQLPAPMMNILNGGEHADNSVDIQEFMIMPIGFDRFSEALRCGAEIFHALKKVLHERGLSTAVGDEGGFAPDLPSNEAALEAIIEAIQRAGYQAGDQVALALDVASSELYRDGRYHLASEGRDFDAAGFADYLAQLVDKYPIVSIEDGMDESDWDGWKVLTERLGGQIQLVGDDLFVTNPQILQQGIDRGIANSILIKLNQIGTVTETLEAIRMADEAGYTSVVSHRSGETEDVAIADLAVATRATQIKTGSLCRSDRVAKYNQLLRIEQELGDDARYVGRDALRPEQG.

Glutamine 163 serves as a coordination point for (2R)-2-phosphoglycerate. Glutamate 205 acts as the Proton donor in catalysis. Mg(2+) contacts are provided by aspartate 242, glutamate 285, and aspartate 312. (2R)-2-phosphoglycerate is bound by residues lysine 337, arginine 366, serine 367, and lysine 388. Lysine 337 (proton acceptor) is an active-site residue.

This sequence belongs to the enolase family. In terms of assembly, component of the RNA degradosome, a multiprotein complex involved in RNA processing and mRNA degradation. Mg(2+) serves as cofactor.

Its subcellular location is the cytoplasm. The protein resides in the secreted. It is found in the cell surface. It carries out the reaction (2R)-2-phosphoglycerate = phosphoenolpyruvate + H2O. Its pathway is carbohydrate degradation; glycolysis; pyruvate from D-glyceraldehyde 3-phosphate: step 4/5. Its function is as follows. Catalyzes the reversible conversion of 2-phosphoglycerate (2-PG) into phosphoenolpyruvate (PEP). It is essential for the degradation of carbohydrates via glycolysis. The chain is Enolase from Halorhodospira halophila (strain DSM 244 / SL1) (Ectothiorhodospira halophila (strain DSM 244 / SL1)).